A 71-amino-acid polypeptide reads, in one-letter code: DNA-directed RNA polymerase subunit omega (71 aa).

The protein belongs to the RNA polymerase subunit omega family. In terms of assembly, the RNAP catalytic core consists of 2 alpha, 1 beta, 1 beta' and 1 omega subunit. When a sigma factor is associated with the core the holoenzyme is formed, which can initiate transcription.

It carries out the reaction RNA(n) + a ribonucleoside 5'-triphosphate = RNA(n+1) + diphosphate. Promotes RNA polymerase assembly. Latches the N- and C-terminal regions of the beta' subunit thereby facilitating its interaction with the beta and alpha subunits. This chain is DNA-directed RNA polymerase subunit omega, found in Aromatoleum aromaticum (strain DSM 19018 / LMG 30748 / EbN1) (Azoarcus sp. (strain EbN1)).